A 732-amino-acid chain; its full sequence is Aldehyde oxidoreductase molybdenum-binding subunit PaoC (732 aa).

Mo-molybdopterin cytosine dinucleotide is bound by residues 241–242 (GF), 468–470 (IGT), 511–512 (GA), 615–621 (RILNPKT), Gln625, and 688–691 (KGVG). The Proton acceptor role is filled by Glu692.

This sequence belongs to the xanthine dehydrogenase family. As to quaternary structure, heterotrimer composed of PaoA, PaoB and PaoC. It depends on Mo-molybdopterin cytosine dinucleotide as a cofactor.

Its subcellular location is the periplasm. It catalyses the reaction an aldehyde + A + H2O = a carboxylate + AH2 + H(+). Its function is as follows. Oxidizes aldehydes to the corresponding carboxylic acids with a preference for aromatic aldehydes. It might play a role in the detoxification of aldehydes to avoid cell damage. The polypeptide is Aldehyde oxidoreductase molybdenum-binding subunit PaoC (Escherichia coli O157:H7).